The following is a 172-amino-acid chain: Chorion protein S18 (172 aa).

Residues 1–17 form the signal peptide; sequence MMKFMCICLCAISAVSA.

The protein belongs to the chorion protein S15/S18 family.

Its subcellular location is the secreted. In terms of biological role, chorion membrane (egg shell) protein; plays a role in protecting the egg from the environment. In Drosophila melanogaster (Fruit fly), this protein is Chorion protein S18 (Cp18).